A 115-amino-acid polypeptide reads, in one-letter code: Replication initiation control protein YabA (115 aa).

Histidine 90, cysteine 92, cysteine 106, and cysteine 109 together coordinate Zn(2+).

It belongs to the YabA family. As to quaternary structure, homotetramer. Interacts with both DnaA and DnaN, acting as a bridge between these two proteins. Zn(2+) is required as a cofactor.

It is found in the cytoplasm. The protein localises to the nucleoid. Involved in control of chromosome replication initiation. Inhibits the cooperative binding of DnaA to the oriC region, thus negatively regulating initiation of chromosome replication. Inhibits the ability of DnaA-ATP to form a helix on DNA; does not disassemble preformed DnaA-DNA helices. Decreases the residence time of DnaA on the chromosome at its binding sites (oriC, replication forks and promoter-binding sites). Tethers DnaA to the replication machinery via the DNA polymerase beta sliding clamp subunit (dnaN). Associates with oriC and other DnaA targets on the chromosome in a DnaA-dependent manner. The protein is Replication initiation control protein YabA of Staphylococcus aureus (strain bovine RF122 / ET3-1).